We begin with the raw amino-acid sequence, 1469 residues long: Regulation of nuclear pre-mRNA domain-containing protein 2 (1469 aa).

Alanine 2 bears the N-acetylalanine mark. Phosphoserine is present on serine 16. Positions 19 to 149 constitute a CID domain; that stretch reads SAGALESSLD…ALREALMDRA (131 aa). Disordered regions lie at residues 329–445 and 489–524; these read STLP…TAAP and TGVS…PSHN. A compositionally biased stretch (basic and acidic residues) spans 370–386; that stretch reads ESDKSATPEPVTDNRDV. The residue at position 374 (serine 374) is a Phosphoserine. Threonine 376 is modified (phosphothreonine). Acidic residues predominate over residues 387–396; that stretch reads EDMELSDVED. A Phosphoserine modification is found at serine 392. Residues 397-412 show a composition bias toward basic and acidic residues; the sequence is DGSKIIVEDRKEKPVE. Over residues 419–430 the composition is skewed to polar residues; that stretch reads GVPTKSTESVSK. Positions 434-445 are enriched in pro residues; it reads CAPPSVPTTAAP. A phosphoserine mark is found at serine 492, serine 495, serine 498, and serine 504. Phosphothreonine is present on threonine 536. Residues 572–594 are disordered; sequence ASEVTSQSTTASPASTTGSAVKG. The span at 576 to 591 shows a compositional bias: low complexity; the sequence is TSQSTTASPASTTGSA. Phosphoserine is present on residues serine 583 and serine 612. A Phosphothreonine modification is found at threonine 617. At serine 633 the chain carries Phosphoserine. Over residues 647-656 the composition is skewed to polar residues; it reads SLGFTGTHNP. Disordered stretches follow at residues 647 to 686, 716 to 867, 919 to 1013, 1033 to 1140, 1154 to 1183, 1204 to 1328, and 1368 to 1414; these read SLGF…TSPS, SSAP…AMMN, SENC…SGVE, KNAS…HGRE, SSFD…FKTT, FNST…PTPP, and GPGL…HRDA. Serine 682, serine 684, serine 735, and serine 738 each carry phosphoserine. Threonine 742 is subject to Phosphothreonine. Serine 749 is modified (phosphoserine). Threonine 751 is modified (phosphothreonine). Polar residues predominate over residues 761–771; that stretch reads PTSSSVDTMSL. Serine 777 and serine 781 each carry phosphoserine. Over residues 777 to 787 the composition is skewed to low complexity; sequence SPGSSTPSSTR. Threonine 782 is modified (phosphothreonine). A phosphoserine mark is found at serine 788, serine 836, serine 845, serine 919, and serine 947. A compositionally biased stretch (polar residues) spans 959–982; sequence PDSNHSGLSQSTAGHLTLPQTQYP. Serine 984 and serine 995 each carry phosphoserine. Polar residues predominate over residues 1047–1073; that stretch reads QTPNKGTSSDGVSLSNLTQPSLPTTDQ. Phosphoserine occurs at positions 1086 and 1117. Low complexity predominate over residues 1159–1168; that stretch reads GPSSASELAS. Positions 1169 to 1178 are enriched in gly residues; sequence LGGGGSGGLT. Residues 1272-1295 are compositionally biased toward pro residues; sequence GPPPPPGEHSGVPFPPPPPPPPPG. Asymmetric dimethylarginine is present on arginine 1375. 2 stretches are compositionally biased toward low complexity: residues 1377 to 1390 and 1400 to 1409; these read SLSL…HLGP and TSSSGLPLSP. 2 positions are modified to asymmetric dimethylarginine: arginine 1432 and arginine 1438.

In terms of assembly, associates with the RNA polymerase II complex.

In Mus musculus (Mouse), this protein is Regulation of nuclear pre-mRNA domain-containing protein 2 (Rprd2).